The chain runs to 290 residues: Small ribosomal subunit biogenesis GTPase RsgA (290 aa).

The region spanning 61–218 (SSELLRPAVA…IVDTPGFSTL (158 aa)) is the CP-type G domain. GTP-binding positions include 110–113 (NKVD) and 161–169 (GPSGAGKST). Residues cysteine 243, cysteine 248, histidine 250, and cysteine 256 each contribute to the Zn(2+) site.

Belongs to the TRAFAC class YlqF/YawG GTPase family. RsgA subfamily. As to quaternary structure, monomer. Associates with 30S ribosomal subunit, binds 16S rRNA. Requires Zn(2+) as cofactor.

It is found in the cytoplasm. One of several proteins that assist in the late maturation steps of the functional core of the 30S ribosomal subunit. Helps release RbfA from mature subunits. May play a role in the assembly of ribosomal proteins into the subunit. Circularly permuted GTPase that catalyzes slow GTP hydrolysis, GTPase activity is stimulated by the 30S ribosomal subunit. This Clostridium botulinum (strain Eklund 17B / Type B) protein is Small ribosomal subunit biogenesis GTPase RsgA.